A 118-amino-acid polypeptide reads, in one-letter code: Small ribosomal subunit protein uS13 (118 aa).

Residues Leu95–Lys118 form a disordered region.

The protein belongs to the universal ribosomal protein uS13 family. In terms of assembly, part of the 30S ribosomal subunit. Forms a loose heterodimer with protein S19. Forms two bridges to the 50S subunit in the 70S ribosome.

Functionally, located at the top of the head of the 30S subunit, it contacts several helices of the 16S rRNA. In the 70S ribosome it contacts the 23S rRNA (bridge B1a) and protein L5 of the 50S subunit (bridge B1b), connecting the 2 subunits; these bridges are implicated in subunit movement. Contacts the tRNAs in the A and P-sites. The sequence is that of Small ribosomal subunit protein uS13 from Blochmanniella floridana.